Reading from the N-terminus, the 220-residue chain is Probable chemoreceptor glutamine deamidase CheD (220 aa).

Belongs to the CheD family.

It carries out the reaction L-glutaminyl-[protein] + H2O = L-glutamyl-[protein] + NH4(+). In terms of biological role, probably deamidates glutamine residues to glutamate on methyl-accepting chemotaxis receptors (MCPs), playing an important role in chemotaxis. The chain is Probable chemoreceptor glutamine deamidase CheD from Cupriavidus metallidurans (strain ATCC 43123 / DSM 2839 / NBRC 102507 / CH34) (Ralstonia metallidurans).